A 243-amino-acid polypeptide reads, in one-letter code: MLARSLLPALALLLAATAGGDACADRGHPSAERSTPETERRRMVEEQLAARGIRDRRVLEAMGKVPRERFVPEQWRSLAYLDEPLPIGRGQTISQPYVVAFMAQALALRGGERVLEVGSGSGYAAAVLAHLAGAVYGIELEPELHARSVETLAELGYGNVHLRRGDGFLGWPERAPFRAIVVSCAMEEIPAPLWEQLVQGGRIVYPKGPEGEVQLLVVVTKTARGPREEHLAPVRFVPMRRGG.

Residues 21–42 (DACADRGHPSAERSTPETERRR) are disordered. Over residues 23–42 (CADRGHPSAERSTPETERRR) the composition is skewed to basic and acidic residues. Ser94 is a catalytic residue.

Belongs to the methyltransferase superfamily. L-isoaspartyl/D-aspartyl protein methyltransferase family.

Its subcellular location is the cytoplasm. It carries out the reaction [protein]-L-isoaspartate + S-adenosyl-L-methionine = [protein]-L-isoaspartate alpha-methyl ester + S-adenosyl-L-homocysteine. Functionally, catalyzes the methyl esterification of L-isoaspartyl residues in peptides and proteins that result from spontaneous decomposition of normal L-aspartyl and L-asparaginyl residues. It plays a role in the repair and/or degradation of damaged proteins. This Anaeromyxobacter sp. (strain Fw109-5) protein is Protein-L-isoaspartate O-methyltransferase 2.